A 63-amino-acid chain; its full sequence is Large ribosomal subunit protein uL29 (63 aa).

The protein belongs to the universal ribosomal protein uL29 family.

The protein is Large ribosomal subunit protein uL29 of Pseudoalteromonas atlantica (strain T6c / ATCC BAA-1087).